The primary structure comprises 350 residues: Formimidoylglutamase (350 aa).

Residues H130, D165, H167, D169, D269, and D271 each coordinate Mn(2+).

This sequence belongs to the arginase family. Mn(2+) is required as a cofactor.

It carries out the reaction N-formimidoyl-L-glutamate + H2O = formamide + L-glutamate. It participates in amino-acid degradation; L-histidine degradation into L-glutamate; L-glutamate from N-formimidoyl-L-glutamate (hydrolase route): step 1/1. In terms of biological role, catalyzes the conversion of N-formimidoyl-L-glutamate to L-glutamate and formamide. This chain is Formimidoylglutamase, found in Aliivibrio fischeri (strain ATCC 700601 / ES114) (Vibrio fischeri).